The chain runs to 275 residues: Release factor glutamine methyltransferase (275 aa).

Residues 117–121, Asp-140, Trp-168, and Asn-182 contribute to the S-adenosyl-L-methionine site; that span reads GTGSG. Position 182 to 185 (182 to 185) interacts with substrate; sequence NPPY.

The protein belongs to the protein N5-glutamine methyltransferase family. PrmC subfamily.

The catalysed reaction is L-glutaminyl-[peptide chain release factor] + S-adenosyl-L-methionine = N(5)-methyl-L-glutaminyl-[peptide chain release factor] + S-adenosyl-L-homocysteine + H(+). Its function is as follows. Methylates the class 1 translation termination release factors RF1/PrfA and RF2/PrfB on the glutamine residue of the universally conserved GGQ motif. The chain is Release factor glutamine methyltransferase from Buchnera aphidicola subsp. Schizaphis graminum (strain Sg).